The sequence spans 325 residues: Aldose 1-epimerase (325 aa).

73–74 (NR) serves as a coordination point for substrate. His177 functions as the Proton donor in the catalytic mechanism. Asp230 lines the substrate pocket. Glu283 acts as the Proton acceptor in catalysis.

It belongs to the aldose epimerase family.

The catalysed reaction is alpha-D-glucose = beta-D-glucose. Its pathway is carbohydrate metabolism; hexose metabolism. This Bacillus subtilis (strain 168) protein is Aldose 1-epimerase (galM).